The sequence spans 132 residues: Large ribosomal subunit protein uL24 (132 aa).

It belongs to the universal ribosomal protein uL24 family. Part of the 50S ribosomal subunit.

In terms of biological role, one of two assembly initiator proteins, it binds directly to the 5'-end of the 23S rRNA, where it nucleates assembly of the 50S subunit. One of the proteins that surrounds the polypeptide exit tunnel on the outside of the subunit. In Aquifex aeolicus (strain VF5), this protein is Large ribosomal subunit protein uL24.